The primary structure comprises 854 residues: Armadillo repeat-containing protein 2 (854 aa).

Disordered stretches follow at residues 1–116, 140–194, and 206–255; these read MLSS…SFPK, QGML…PLLT, and EVSL…ETDT. Residues 58 to 73 show a composition bias toward low complexity; sequence PASSRSPENRPPSSFS. Composition is skewed to polar residues over residues 74–87 and 162–187; these read LHAS…SKPI and KPVS…TGQL. ARM repeat units lie at residues 255–294, 298–337, 356–396, 401–442, 455–496, 499–540, 544–583, 585–605, 606–649, 651–692, 694–733, and 735–777; these read TEVD…RTLE, MLGK…ALKV, EKND…ALKF, PGFL…HLLV, PLTR…KLTS, DCCA…NLTA, QARE…EAKP, AEAE…AIHP, RIGP…NLSF, QVKS…NLSQ, HDVC…NLTV, and KEKR…NFSE.

Required for sperm flagellum axoneme organization and function. Involved in axonemal central pair complex assembly and/or stability. In Mus musculus (Mouse), this protein is Armadillo repeat-containing protein 2.